The following is a 404-amino-acid chain: Phosphopentomutase (404 aa).

Mn(2+) is bound by residues D10, D303, H308, D344, H345, and H356.

The protein belongs to the phosphopentomutase family. It depends on Mn(2+) as a cofactor.

It localises to the cytoplasm. The enzyme catalyses 2-deoxy-alpha-D-ribose 1-phosphate = 2-deoxy-D-ribose 5-phosphate. It carries out the reaction alpha-D-ribose 1-phosphate = D-ribose 5-phosphate. It participates in carbohydrate degradation; 2-deoxy-D-ribose 1-phosphate degradation; D-glyceraldehyde 3-phosphate and acetaldehyde from 2-deoxy-alpha-D-ribose 1-phosphate: step 1/2. In terms of biological role, isomerase that catalyzes the conversion of deoxy-ribose 1-phosphate (dRib-1-P) and ribose 1-phosphate (Rib-1-P) to deoxy-ribose 5-phosphate (dRib-5-P) and ribose 5-phosphate (Rib-5-P), respectively. The protein is Phosphopentomutase of Shewanella sp. (strain W3-18-1).